Reading from the N-terminus, the 339-residue chain is Glyceraldehyde-3-phosphate dehydrogenase (339 aa).

Residues 11 to 12 (TI) and Gly110 contribute to the NAD(+) site. D-glyceraldehyde 3-phosphate is bound at residue 139–141 (SCN). Cys140 acts as the Nucleophile in catalysis. Arg168 provides a ligand contact to NAD(+). 194–195 (HG) contributes to the D-glyceraldehyde 3-phosphate binding site. Gln301 is an NAD(+) binding site.

Belongs to the glyceraldehyde-3-phosphate dehydrogenase family. As to quaternary structure, homotetramer.

Its subcellular location is the cytoplasm. It carries out the reaction D-glyceraldehyde 3-phosphate + phosphate + NADP(+) = (2R)-3-phospho-glyceroyl phosphate + NADPH + H(+). The catalysed reaction is D-glyceraldehyde 3-phosphate + phosphate + NAD(+) = (2R)-3-phospho-glyceroyl phosphate + NADH + H(+). Its pathway is carbohydrate degradation; glycolysis; pyruvate from D-glyceraldehyde 3-phosphate: step 1/5. The sequence is that of Glyceraldehyde-3-phosphate dehydrogenase from Methanospirillum hungatei JF-1 (strain ATCC 27890 / DSM 864 / NBRC 100397 / JF-1).